Reading from the N-terminus, the 123-residue chain is Large ribosomal subunit protein bL21 (123 aa).

This sequence belongs to the bacterial ribosomal protein bL21 family. In terms of assembly, part of the 50S ribosomal subunit. Contacts protein L20.

Functionally, this protein binds to 23S rRNA in the presence of protein L20. The chain is Large ribosomal subunit protein bL21 from Sinorhizobium fredii (strain NBRC 101917 / NGR234).